The chain runs to 342 residues: DDB1- and CUL4-associated factor 7 (342 aa).

7 WD repeats span residues 6–52 (KRKE…LVGL), 60–100 (ICRN…VWRV), 108–150 (ECLL…IWGL), 165–206 (HVKT…MFDL), 213–252 (TIIYEDPQHHPLLRLCWNKQDPNYLATMAMDGMEVVILDV), 257–296 (TPVARLNNHRACVNGIAWAPHSSCHICTAADDHQALIWDI), and 303–342 (IEDPILAYTAEGEINNVQWASTQPDWIAICYNNCLEILRV).

Belongs to the WD repeat DCAF7 family. Interacts with DYRK1A, DYRK1B and DIAPH1. Interacts with DDB1. Interacts with ZNF703. Interacts with human adenovirus 5 E1A protein.

The protein resides in the cytoplasm. It is found in the nucleus. It participates in protein modification; protein ubiquitination. Its function is as follows. Involved in craniofacial development. Acts upstream of the EDN1 pathway and is required for formation of the upper jaw equivalent, the palatoquadrate. The activity required for EDN1 pathway function differs between the first and second arches. Associates with DIAPH1 and controls GLI1 transcriptional activity. Could be involved in normal and disease skin development. May function as a substrate receptor for CUL4-DDB1 E3 ubiquitin-protein ligase complex. The chain is DDB1- and CUL4-associated factor 7 (DCAF7) from Homo sapiens (Human).